The following is a 295-amino-acid chain: UDP-N-acetylenolpyruvoylglucosamine reductase (295 aa).

The FAD-binding PCMH-type domain occupies 23-188; the sequence is QVGGPADFLA…ISAKFALKPG (166 aa). Arginine 167 is an active-site residue. The Proton donor role is filled by serine 217. Glutamate 287 is an active-site residue.

The protein belongs to the MurB family. FAD serves as cofactor.

It localises to the cytoplasm. The catalysed reaction is UDP-N-acetyl-alpha-D-muramate + NADP(+) = UDP-N-acetyl-3-O-(1-carboxyvinyl)-alpha-D-glucosamine + NADPH + H(+). It participates in cell wall biogenesis; peptidoglycan biosynthesis. Cell wall formation. This chain is UDP-N-acetylenolpyruvoylglucosamine reductase, found in Streptococcus equi subsp. equi (strain 4047).